A 252-amino-acid polypeptide reads, in one-letter code: Protein A47 (252 aa).

It belongs to the orthopoxvirus A47 protein family.

The sequence is that of Protein A47 from Vaccinia virus (strain Western Reserve) (VACV).